Reading from the N-terminus, the 226-residue chain is AA9 family lytic polysaccharide monooxygenase E (226 aa).

Residues 1-18 (MLANGAIVFLAAALGVSG) form the signal peptide. Residue His19 participates in Cu(2+) binding. 2 disulfides stabilise this stretch: Cys56-Cys174 and Cys144-Cys226. An N-linked (GlcNAc...) asparagine glycan is attached at Asn69. Cu(2+) is bound at residue His86. Residues His160 and Gln169 each coordinate O2. Tyr171 contributes to the Cu(2+) binding site.

It belongs to the polysaccharide monooxygenase AA9 family. Requires Cu(2+) as cofactor.

The protein localises to the secreted. The enzyme catalyses [(1-&gt;4)-beta-D-glucosyl]n+m + reduced acceptor + O2 = 4-dehydro-beta-D-glucosyl-[(1-&gt;4)-beta-D-glucosyl]n-1 + [(1-&gt;4)-beta-D-glucosyl]m + acceptor + H2O.. In terms of biological role, lytic polysaccharide monooxygenase (LPMO) that depolymerizes crystalline and amorphous polysaccharides via the oxidation of scissile alpha- or beta-(1-4)-glycosidic bonds, yielding C1 and C4 oxidation products. Catalysis by LPMOs requires the reduction of the active-site copper from Cu(II) to Cu(I) by a reducing agent and H(2)O(2) or O(2) as a cosubstrate. Shows endoglucanase activity on tamarind xyloglucan, as well as on beechwood xylan when combined with phosphoric acid swollen cellulose (PASC). Shows no activity on wheat arabinoxylan, konjac glucomannan, acetylated spruce galactoglucomannan, or cellopentaose. In Thermothielavioides terrestris (strain ATCC 38088 / NRRL 8126) (Thielavia terrestris), this protein is AA9 family lytic polysaccharide monooxygenase E.